The chain runs to 831 residues: Isethionate sulfite-lyase (831 aa).

The PFL domain occupies 32 to 701 (PRVFRLLERF…VVSATPNGRT (670 aa)). 2-hydroxyethane-1-sulfonate contacts are provided by residues Arg189, Gln193, 468 to 470 (CTE), and Arg679. Catalysis depends on Cys468, which acts as the Cysteine radical intermediate. Glu470 (proton acceptor) is an active-site residue. The Glycine radical domain occupies 708-831 (DGSSASHGAD…LIARTEHDVM (124 aa)). Residue Gly806 is modified to Glycine radical.

The protein belongs to the glycyl radical enzyme (GRE) family. As to quaternary structure, homodimer. Requires the activating protein IslB to generate the key active site glycyl radical on Gly-806 that is involved in catalysis.

It catalyses the reaction 2-hydroxyethane-1-sulfonate = acetaldehyde + sulfite + H(+). The protein operates within organosulfur degradation; alkanesulfonate degradation. Functionally, involved in an anaerobic respiration pathway that converts the sulfonate isethionate (2-hydroxyethanesulfonate) to ammonia, acetate and sulfide. Catalyzes the radical-mediated C-S bond cleavage of isethionate (2-hydroxyethanesulfonate) to form sulfite and acetaldehyde. This is Isethionate sulfite-lyase from Desulfovibrio desulfuricans (strain ATCC 27774 / DSM 6949 / MB).